Reading from the N-terminus, the 377-residue chain is Spore coat protein SA (377 aa).

It belongs to the glycosyltransferase group 1 family. Glycosyltransferase 4 subfamily.

The polypeptide is Spore coat protein SA (cotSA) (Bacillus subtilis (strain 168)).